A 149-amino-acid chain; its full sequence is Transcriptional regulator MraZ (149 aa).

2 consecutive SpoVT-AbrB domains span residues 9–52 (AYSY…PRAQ) and 82–125 (AQEV…DRAR).

Belongs to the MraZ family. Forms oligomers.

It localises to the cytoplasm. The protein resides in the nucleoid. The chain is Transcriptional regulator MraZ from Treponema pallidum subsp. pallidum (strain SS14).